The following is a 371-amino-acid chain: Alginate lyase (371 aa).

The signal sequence occupies residues 1-26; sequence MQSTDLKRLLIPSLLGLAIVTGSAQA. Residues 67–68, 140–141, and Tyr258 contribute to the substrate site; these read SK and HT.

It belongs to the polysaccharide lyase 5 family.

It is found in the periplasm. The catalysed reaction is Eliminative cleavage of alginate to give oligosaccharides with 4-deoxy-alpha-L-erythro-hex-4-enuronosyl groups at their non-reducing ends and beta-D-mannuronate at their reducing end.. Catalyzes the depolymerization of alginate by cleaving the beta-1,4 glycosidic bond between two adjacent sugar residues via a beta-elimination mechanism. May serve to degrade mislocalized alginate that is trapped in the periplasmic space. This is Alginate lyase from Pseudomonas fluorescens (strain ATCC BAA-477 / NRRL B-23932 / Pf-5).